The sequence spans 500 residues: Probable glycine dehydrogenase (decarboxylating) subunit 2 (500 aa).

Position 273 is an N6-(pyridoxal phosphate)lysine (K273).

Belongs to the GcvP family. C-terminal subunit subfamily. In terms of assembly, the glycine cleavage system is composed of four proteins: P, T, L and H. In this organism, the P 'protein' is a heterodimer of two subunits. Pyridoxal 5'-phosphate serves as cofactor.

It catalyses the reaction N(6)-[(R)-lipoyl]-L-lysyl-[glycine-cleavage complex H protein] + glycine + H(+) = N(6)-[(R)-S(8)-aminomethyldihydrolipoyl]-L-lysyl-[glycine-cleavage complex H protein] + CO2. In terms of biological role, the glycine cleavage system catalyzes the degradation of glycine. The P protein binds the alpha-amino group of glycine through its pyridoxal phosphate cofactor; CO(2) is released and the remaining methylamine moiety is then transferred to the lipoamide cofactor of the H protein. The protein is Probable glycine dehydrogenase (decarboxylating) subunit 2 of Rhodopirellula baltica (strain DSM 10527 / NCIMB 13988 / SH1).